The sequence spans 377 residues: Histidinol-phosphate aminotransferase (377 aa).

K230 is subject to N6-(pyridoxal phosphate)lysine.

Belongs to the class-II pyridoxal-phosphate-dependent aminotransferase family. Histidinol-phosphate aminotransferase subfamily. In terms of assembly, homodimer. Pyridoxal 5'-phosphate serves as cofactor.

It catalyses the reaction L-histidinol phosphate + 2-oxoglutarate = 3-(imidazol-4-yl)-2-oxopropyl phosphate + L-glutamate. The protein operates within amino-acid biosynthesis; L-histidine biosynthesis; L-histidine from 5-phospho-alpha-D-ribose 1-diphosphate: step 7/9. The protein is Histidinol-phosphate aminotransferase of Mycobacterium leprae (strain Br4923).